Here is a 138-residue protein sequence, read N- to C-terminus: Fluoride-specific ion channel FluC (138 aa).

Helical transmembrane passes span 34–54, 60–80, 88–108, and 112–132; these read FMPK…GACA, MQFG…SFLM, FWGT…VVLV, and LPHA…AWLM. Residues G95 and T98 each contribute to the Na(+) site.

The protein belongs to the fluoride channel Fluc/FEX (TC 1.A.43) family.

It localises to the cell membrane. The enzyme catalyses fluoride(in) = fluoride(out). Its activity is regulated as follows. Na(+) is not transported, but it plays an essential structural role and its presence is essential for fluoride channel function. Its function is as follows. Fluoride-specific ion channel. Important for reducing fluoride concentration in the cell, thus reducing its toxicity. This is Fluoride-specific ion channel FluC from Corynebacterium efficiens (strain DSM 44549 / YS-314 / AJ 12310 / JCM 11189 / NBRC 100395).